The sequence spans 134 residues: ATP synthase epsilon chain (134 aa).

The protein belongs to the ATPase epsilon chain family. In terms of assembly, F-type ATPases have 2 components, CF(1) - the catalytic core - and CF(0) - the membrane proton channel. CF(1) has five subunits: alpha(3), beta(3), gamma(1), delta(1), epsilon(1). CF(0) has three main subunits: a, b and c.

Its subcellular location is the cell membrane. Its function is as follows. Produces ATP from ADP in the presence of a proton gradient across the membrane. This Staphylococcus aureus (strain USA300) protein is ATP synthase epsilon chain.